The sequence spans 802 residues: Copper-exporting P-type ATPase (802 aa).

HMA domains lie at 5–71 (KEIA…YHVV) and 73–139 (EKAE…YKLK). The Cu(+) site is built by Cys-16, Cys-19, Cys-84, and Cys-87. Helical transmembrane passes span 162–181 (LIFSAVLSFPLLWAMVSHFT), 196–218 (WMQFALATPVQFLIGWPFYVGAY), 230–249 (VLVALGTTAAYAYSLYLTFQ), 259–278 (GLYYETSAILLTLILLGKLF), 412–434 (ISGIFVPIVLGIAVLTFLIWYLW), and 447–469 (FIAVLVIACPCALGLATPTSIMA). The active-site 4-aspartylphosphate intermediate is Asp-499. Mg(2+)-binding residues include Asp-698 and Asp-702. Helical transmembrane passes span 756 to 775 (LFWALGYNSLGIPIAALGFL) and 779 to 796 (IAGAAMAFSSVSVVLNAL).

The protein belongs to the cation transport ATPase (P-type) (TC 3.A.3) family. Type IB subfamily. As to quaternary structure, monomer at sub-stoichiometric copper concentrations. Homodimer at higher copper concentrations. Forms a heterodimer (electrostatic interactions) with CopZ during the transfer of Cu(+).

It localises to the cell membrane. The catalysed reaction is Cu(+)(in) + ATP + H2O = Cu(+)(out) + ADP + phosphate + H(+). Functionally, involved in copper export. The sequence is that of Copper-exporting P-type ATPase (copA) from Bacillus subtilis (strain 168).